The primary structure comprises 78 residues: MKTLLLTLVVLTIVCLDLGYTMTCYNQQLSQPQTTTTCAESFCYKKTWSGTIIERGCGCPPMKPPIRLKCCRTEKCNN.

The signal sequence occupies residues 1–21 (MKTLLLTLVVLTIVCLDLGYT). Cystine bridges form between cysteine 24–cysteine 43, cysteine 38–cysteine 57, cysteine 59–cysteine 70, and cysteine 71–cysteine 76.

The protein belongs to the three-finger toxin family. Short-chain subfamily. Type I alpha-neurotoxin sub-subfamily. Expressed by the venom gland.

Its subcellular location is the secreted. Its function is as follows. Binds to muscle nicotinic acetylcholine receptor (nAChR) and inhibit acetylcholine from binding to the receptor, thereby impairing neuromuscular transmission. The chain is Short neurotoxin 342 from Drysdalia coronoides (White-lipped snake).